Here is a 30-residue protein sequence, read N- to C-terminus: Large ribosomal subunit protein bL25 (30 aa).

This sequence belongs to the bacterial ribosomal protein bL25 family. Part of the 50S ribosomal subunit; part of the 5S rRNA/L5/L18/L25 subcomplex. Contacts the 5S rRNA. Binds to the 5S rRNA independently of L5 and L18.

In terms of biological role, this is one of the proteins that binds to the 5S RNA in the ribosome where it forms part of the central protuberance. The polypeptide is Large ribosomal subunit protein bL25 (rplY) (Anabaena variabilis).